The sequence spans 288 residues: MKHISAVYNPAFTNIASKLNQTELLKDAAQSLNIQLDFFTCFDINTNQDKTKLPFKSNTILFLDKNIALAQWLESVGLRVINSSIAINNADNKALSHAVLAQHPTIKQIPTLIGPQNFRLAWYPEKLEQFIEQIKRCFQFPVIVKSIYGSFGDYVFLCKDEQKLRQTLSGLTEQIIVQQYIATSNSEAVRVIVVNNQVVGALHTQNEGDFRSNLNKGAVGEPYQLSQEETKLAITISQAMQLFYCGIDFLFDQDRSLIFCEVNSNVQLTKSSMYLKTNLAIQLLASIA.

Residues Lys-107–Ala-288 enclose the ATP-grasp domain. Residues Lys-145 and Gln-178 to Ala-188 each bind ATP. Residues Asp-248, Glu-261, and Asn-263 each coordinate Mg(2+). Mn(2+) contacts are provided by Asp-248, Glu-261, and Asn-263.

This sequence belongs to the RimK family.

This is an uncharacterized protein from Mycoplasma pneumoniae (strain ATCC 29342 / M129 / Subtype 1) (Mycoplasmoides pneumoniae).